Consider the following 309-residue polypeptide: Taste receptor type 2 member 8 (309 aa).

Over 1–7 the chain is Extracellular; that stretch reads MFSPADN. A helical membrane pass occupies residues 8 to 28; the sequence is IFIILITGEFIIGILGNGYIG. The Cytoplasmic segment spans residues 29–50; that stretch reads LVNWIDWIKKKKISTIDCILTN. A helical membrane pass occupies residues 51-71; that stretch reads LVISRICLISVMVVNGIVIVL. The Extracellular portion of the chain corresponds to 72–82; the sequence is YPDVYTKTKLQ. The helical transmembrane segment at 83 to 103 threads the bilayer; that stretch reads IVICTFWTFANYLNMWFTACL. At 104-131 the chain is on the cytoplasmic side; it reads NVFYSLKVANSSHPLFLWLKRKIDMVVR. Residues 132 to 152 traverse the membrane as a helical segment; sequence WILLGCFAISLLVSLIIATVL. Topologically, residues 153-184 are extracellular; it reads SHDYRFHAIAKHKRNVTEMFHVSKMPYFEPLT. N-linked (GlcNAc...) asparagine glycosylation is present at asparagine 167. A helical transmembrane segment spans residues 185–205; the sequence is LFNLLAIVPFIVSLMSFFLLV. Over 206–239 the chain is Cytoplasmic; sequence RSLWRHTKQIKLYATGGRDPSTEAHVRAIKTMTL. Residues 240–260 traverse the membrane as a helical segment; that stretch reads LIFFFFLYYITSLLVXFSYLI. Residues 261–266 lie on the Extracellular side of the membrane; the sequence is TNYKLA. Residues 267-287 form a helical membrane-spanning segment; the sequence is MAFGEIVAILYPSGHSLILII. Residues 288–309 lie on the Cytoplasmic side of the membrane; that stretch reads LNNKLRQASVRMLTCRKIACVT.

This sequence belongs to the G-protein coupled receptor T2R family.

It localises to the membrane. Functionally, receptor that may play a role in the perception of bitterness and is gustducin-linked. May play a role in sensing the chemical composition of the gastrointestinal content. The activity of this receptor may stimulate alpha gustducin, mediate PLC-beta-2 activation and lead to the gating of TRPM5. This chain is Taste receptor type 2 member 8 (TAS2R8), found in Papio hamadryas (Hamadryas baboon).